A 247-amino-acid chain; its full sequence is Killer cell lectin-like receptor subfamily I member 2 (247 aa).

Positions 1 to 12 (MPRKKQNERGTN) are enriched in basic and acidic residues. A disordered region spans residues 1–39 (MPRKKQNERGTNKQEIINIETKSSTFQEKQRQSKTDQIS). At 1-79 (MPRKKQNERG…GTDPWLTTWR (79 aa)) the chain is on the cytoplasmic side. Residues 80–100 (IITVILGTSCIILVTKVGFLI) traverse the membrane as a helical segment. Over 101–247 (PNLFSRGEKR…KAYTCEFNLQ (147 aa)) the chain is Extracellular. 4 N-linked (GlcNAc...) asparagine glycosylation sites follow: asparagine 125, asparagine 196, asparagine 212, and asparagine 218. The C-type lectin domain occupies 139–243 (FGNNFYLFFR…CSSKKAYTCE (105 aa)). 2 disulfide bridges follow: cysteine 160-cysteine 242 and cysteine 221-cysteine 234.

Heterodimer with KLRE1. Expressed in natural killer (NK) cells.

It localises to the cell membrane. Lectin-like receptor for natural killer (NK) cells. Heterodimer formation with KLRE1 mediates NK cell cytolytic activity. The protein is Killer cell lectin-like receptor subfamily I member 2 of Rattus norvegicus (Rat).